Here is a 627-residue protein sequence, read N- to C-terminus: Carene synthase, chloroplastic (627 aa).

Residues methionine 1–leucine 36 constitute a chloroplast transit peptide. Mg(2+)-binding residues include aspartate 378, aspartate 382, and aspartate 530. The DDXXD motif signature appears at aspartate 378–aspartate 382.

The protein belongs to the terpene synthase family. Tpsd subfamily. It depends on Mg(2+) as a cofactor. The cofactor is Mn(2+).

It localises to the plastid. The protein resides in the chloroplast. It catalyses the reaction (2E)-geranyl diphosphate = (+)-car-3-ene + diphosphate. Its pathway is terpene metabolism; oleoresin biosynthesis. Functionally, terpene synthase (TPS) involved in defensive oleoresin formation in conifers in response to insect attack or other injury. The protein is Carene synthase, chloroplastic (JF67) of Picea abies (Norway spruce).